A 173-amino-acid polypeptide reads, in one-letter code: Crossover junction endodeoxyribonuclease RuvC (173 aa).

Residues Asp-8, Glu-69, and Asp-141 contribute to the active site. 3 residues coordinate Mg(2+): Asp-8, Glu-69, and Asp-141.

The protein belongs to the RuvC family. In terms of assembly, homodimer which binds Holliday junction (HJ) DNA. The HJ becomes 2-fold symmetrical on binding to RuvC with unstacked arms; it has a different conformation from HJ DNA in complex with RuvA. In the full resolvosome a probable DNA-RuvA(4)-RuvB(12)-RuvC(2) complex forms which resolves the HJ. Mg(2+) is required as a cofactor.

The protein localises to the cytoplasm. It carries out the reaction Endonucleolytic cleavage at a junction such as a reciprocal single-stranded crossover between two homologous DNA duplexes (Holliday junction).. The RuvA-RuvB-RuvC complex processes Holliday junction (HJ) DNA during genetic recombination and DNA repair. Endonuclease that resolves HJ intermediates. Cleaves cruciform DNA by making single-stranded nicks across the HJ at symmetrical positions within the homologous arms, yielding a 5'-phosphate and a 3'-hydroxyl group; requires a central core of homology in the junction. The consensus cleavage sequence is 5'-(A/T)TT(C/G)-3'. Cleavage occurs on the 3'-side of the TT dinucleotide at the point of strand exchange. HJ branch migration catalyzed by RuvA-RuvB allows RuvC to scan DNA until it finds its consensus sequence, where it cleaves and resolves the cruciform DNA. This is Crossover junction endodeoxyribonuclease RuvC from Stenotrophomonas maltophilia (strain K279a).